Here is a 274-residue protein sequence, read N- to C-terminus: Isoprenyl transferase (274 aa).

The active site involves Asp49. Asp49 contacts Mg(2+). Substrate is bound by residues 50-53 (GNRR), Phe54, Arg62, His66, and 94-96 (STD). Asn97 (proton acceptor) is an active-site residue. Residues Arg100, Arg223, and 229 to 231 (RLS) each bind substrate. Glu242 contributes to the Mg(2+) binding site.

The protein belongs to the UPP synthase family. As to quaternary structure, homodimer. The cofactor is Mg(2+).

Its function is as follows. Catalyzes the condensation of isopentenyl diphosphate (IPP) with allylic pyrophosphates generating different type of terpenoids. The sequence is that of Isoprenyl transferase from Deinococcus radiodurans (strain ATCC 13939 / DSM 20539 / JCM 16871 / CCUG 27074 / LMG 4051 / NBRC 15346 / NCIMB 9279 / VKM B-1422 / R1).